The following is a 510-amino-acid chain: Bifunctional purine biosynthesis protein PurH (510 aa).

One can recognise an MGS-like domain in the interval 1–145; sequence MTKRALLSVS…KNFAAVLPIV (145 aa).

It belongs to the PurH family.

The catalysed reaction is (6R)-10-formyltetrahydrofolate + 5-amino-1-(5-phospho-beta-D-ribosyl)imidazole-4-carboxamide = 5-formamido-1-(5-phospho-D-ribosyl)imidazole-4-carboxamide + (6S)-5,6,7,8-tetrahydrofolate. It catalyses the reaction IMP + H2O = 5-formamido-1-(5-phospho-D-ribosyl)imidazole-4-carboxamide. The protein operates within purine metabolism; IMP biosynthesis via de novo pathway; 5-formamido-1-(5-phospho-D-ribosyl)imidazole-4-carboxamide from 5-amino-1-(5-phospho-D-ribosyl)imidazole-4-carboxamide (10-formyl THF route): step 1/1. It participates in purine metabolism; IMP biosynthesis via de novo pathway; IMP from 5-formamido-1-(5-phospho-D-ribosyl)imidazole-4-carboxamide: step 1/1. This is Bifunctional purine biosynthesis protein PurH from Lactiplantibacillus plantarum (strain ATCC BAA-793 / NCIMB 8826 / WCFS1) (Lactobacillus plantarum).